The sequence spans 553 residues: Dihydroxy-acid dehydratase (553 aa).

Asp-78 contacts Mg(2+). [2Fe-2S] cluster is bound at residue Cys-119. 2 residues coordinate Mg(2+): Asp-120 and Lys-121. Residue Lys-121 is modified to N6-carboxylysine. Residue Cys-193 participates in [2Fe-2S] cluster binding. Position 441 (Glu-441) interacts with Mg(2+). Ser-467 (proton acceptor) is an active-site residue.

Belongs to the IlvD/Edd family. Homodimer. It depends on [2Fe-2S] cluster as a cofactor. Requires Mg(2+) as cofactor.

The enzyme catalyses (2R)-2,3-dihydroxy-3-methylbutanoate = 3-methyl-2-oxobutanoate + H2O. It carries out the reaction (2R,3R)-2,3-dihydroxy-3-methylpentanoate = (S)-3-methyl-2-oxopentanoate + H2O. The protein operates within amino-acid biosynthesis; L-isoleucine biosynthesis; L-isoleucine from 2-oxobutanoate: step 3/4. It functions in the pathway amino-acid biosynthesis; L-valine biosynthesis; L-valine from pyruvate: step 3/4. Its function is as follows. Functions in the biosynthesis of branched-chain amino acids. Catalyzes the dehydration of (2R,3R)-2,3-dihydroxy-3-methylpentanoate (2,3-dihydroxy-3-methylvalerate) into 2-oxo-3-methylpentanoate (2-oxo-3-methylvalerate) and of (2R)-2,3-dihydroxy-3-methylbutanoate (2,3-dihydroxyisovalerate) into 2-oxo-3-methylbutanoate (2-oxoisovalerate), the penultimate precursor to L-isoleucine and L-valine, respectively. In Geobacter metallireducens (strain ATCC 53774 / DSM 7210 / GS-15), this protein is Dihydroxy-acid dehydratase.